The chain runs to 176 residues: GTP-dependent dephospho-CoA kinase (176 aa).

GTP contacts are provided by D47, V48, D66, and E125.

It belongs to the GTP-dependent DPCK family.

The catalysed reaction is 3'-dephospho-CoA + GTP = GDP + CoA + H(+). It functions in the pathway cofactor biosynthesis; coenzyme A biosynthesis. Its function is as follows. Catalyzes the GTP-dependent phosphorylation of the 3'-hydroxyl group of dephosphocoenzyme A to form coenzyme A (CoA). The chain is GTP-dependent dephospho-CoA kinase from Methanocella arvoryzae (strain DSM 22066 / NBRC 105507 / MRE50).